Consider the following 421-residue polypeptide: 3-alpha-mycarosylerythronolide B desosaminyl transferase (421 aa).

The N-terminal stretch at 1-23 is a signal peptide; sequence MRVVFSSMASKSHLFGLVPLAWA.

This sequence belongs to the glycosyltransferase 28 family. Heterotetramer composed of EryCII and EryCIII.

The catalysed reaction is 3-O-alpha-L-mycarosylerythronolide B + dTDP-alpha-D-desosamine = erythromycin D + dTDP + H(+). It functions in the pathway antibiotic biosynthesis; erythromycin biosynthesis. Catalyzes the conversion of alpha-L-mycarosylerythronolide B into erythromycin D in the erythromycin biosynthesis pathway. The polypeptide is 3-alpha-mycarosylerythronolide B desosaminyl transferase (eryCIII) (Saccharopolyspora erythraea (strain ATCC 11635 / DSM 40517 / JCM 4748 / NBRC 13426 / NCIMB 8594 / NRRL 2338)).